Here is a 212-residue protein sequence, read N- to C-terminus: Thymidylate kinase (212 aa).

10–17 contacts ATP; the sequence is GIDGCGKT.

This sequence belongs to the thymidylate kinase family.

The enzyme catalyses dTMP + ATP = dTDP + ADP. Its function is as follows. Phosphorylation of dTMP to form dTDP in both de novo and salvage pathways of dTTP synthesis. This is Thymidylate kinase from Prochlorococcus marinus (strain MIT 9301).